We begin with the raw amino-acid sequence, 272 residues long: Small ribosomal subunit protein mS23 (272 aa).

Residues 236 to 272 (AGATGGAKEESDPAILPELEVAESTSESAQPAEIRTG) are disordered.

This sequence belongs to the mitochondrion-specific ribosomal protein mS23 family. Component of the mitochondrial small ribosomal subunit.

It is found in the mitochondrion. The polypeptide is Small ribosomal subunit protein mS23 (RSM25) (Coccidioides immitis (strain RS) (Valley fever fungus)).